Reading from the N-terminus, the 606-residue chain is Polyphenol oxidase A1, chloroplastic (606 aa).

The transit peptide at 1 to 92 (MTSISALSFI…TLATNPSALA (92 aa)) directs the protein to the chloroplast. Residues 32–63 (KQHQSSKLRKPKRQVTCSSNNNQNNPKEEQEL) form a disordered region. The span at 35–44 (QSSKLRKPKR) shows a compositional bias: basic residues. 2 disulfides stabilise this stretch: C103-C121 and C120-C182. Cu cation contacts are provided by H181, H202, H211, H333, H337, and H367. The 2'-(S-cysteinyl)-histidine (Cys-His) cross-link spans 185–202 (CDGAYSQIGFPDLKLQVH).

Belongs to the tyrosinase family. The cofactor is Cu(2+).

The protein resides in the plastid. It localises to the chloroplast thylakoid lumen. The enzyme catalyses 2 catechol + O2 = 2 1,2-benzoquinone + 2 H2O. In terms of biological role, catalyzes the oxidation of mono- and o-diphenols to o-diquinones. The protein is Polyphenol oxidase A1, chloroplastic of Vicia faba (Broad bean).